The following is a 307-amino-acid chain: Dioxygenase swnH1 (307 aa).

Residues His149, Asp151, and His227 each contribute to the Fe cation site.

It belongs to the PhyH family. As to quaternary structure, homodimer. Fe cation is required as a cofactor.

It participates in mycotoxin biosynthesis. Its function is as follows. Dioxygenase; part of the gene cluster that mediates the biosynthesis of swainsonine (SW), a cytotoxic fungal alkaloid and a potential cancer therapy drug. Swainsonine production occurs via a multibranched pathway and is dispensable for fungal colonization of plants and infection of insect hosts. The first step of swainsonine biosynthesis is the production of the precursor pipecolic acid (PA) via conversion of L-lysine (Lys) to 1-piperideine-6-carboxylate (P6C) by the aminotransferase swnA, the latter being further reduced to PA by the reductase swnR. PA can be converted from lysine by both the SW biosynthetic cluster and the unclustered genes such as lysine cyclodeaminase. The PKS-NRPS hybrid synthetase swnK uptakes and condensates PA and malonyl-CoA with and without skipping of the ketoreductase (KR) domain in order to produce 3 intermediates, 1-oxoindolizidine, (1S)-1-hydroxyindolizin, and (1R)-1-hydroxyindolizine; with the transisomer (1S)-1-hydroxyindolizin being predominant. The terminal thioester reductase (TE) domain of swnK is involved in reduction of the thioester bond to release the intermediate aldehydes. The oxidoreductase swnN could contribute to the reduction of 1-oxoindolizidine to (1S)-1-hydroxyindolizin and (1R)-1-hydroxyindolizine, contributing to the major route of SW production. The dioxygenase swnH2 would be responsible for the oxidization of (1R)-1-hydroxyindolizine into (1R,2S)-1,2-dihydroxyindolizine and of (1S)-1-hydroxyindolizin to yield both (1R,2S)-1,2-dihydroxyindolizine and (1S,2S)-1,2-dihydroxyindolizine. The dioxygenase swnH1 then performs the conversion of the 1,2-dihydroxyindolizine epimers to SW. The sequence is that of Dioxygenase swnH1 from Metarhizium robertsii (strain ARSEF 23 / ATCC MYA-3075) (Metarhizium anisopliae (strain ARSEF 23)).